Reading from the N-terminus, the 684-residue chain is Actin-related protein 5 (684 aa).

A coiled-coil region spans residues 262–469 (KEKSVIIQLP…ARQKQKQKAN (208 aa)). 2 disordered regions span residues 392-443 (KEKK…PEHY) and 481-500 (VNPT…EDPE). Positions 402-443 (SMKDGRLAQKRKRDEEKEKEKEKEEERDRQEEESFLKDPEHY) are enriched in basic and acidic residues.

This sequence belongs to the actin family. ARP5 subfamily. In terms of assembly, component of the chromatin-remodeling Ino80 complex.

It is found in the nucleus. Its function is as follows. Proposed core component of the chromatin remodeling Ino80 complex which is involved in transcriptional regulation, DNA replication and probably DNA repair. The protein is Actin-related protein 5 (arpE) of Dictyostelium discoideum (Social amoeba).